The chain runs to 295 residues: Small ribosomal subunit protein uS2 (295 aa).

An N-acetylserine modification is found at Ser-2. Phosphoserine is present on Ser-43. Lys-52 carries the post-translational modification N6-acetyllysine. Residues 54-113 (TWEKLLLAARAIVAIENPADVSVISSRNTGQRAVLKFAAATGATPIAGRFTPGTFTNQIQ) are interaction with PPP1R16B. Residue Lys-89 is modified to N6-acetyllysine; alternate. Residue Lys-89 forms a Glycyl lysine isopeptide (Lys-Gly) (interchain with G-Cter in SUMO2); alternate linkage. Thr-97 bears the Phosphothreonine mark. 2 laminin-binding regions span residues 161 to 180 (IPCN…MLAR) and 205 to 229 (RDPE…EFQG). [DE]-W-[ST] repeat units follow at residues 230 to 232 (EWT), 247 to 249 (DWS), 266 to 268 (DWS), 275 to 277 (DWS), and 293 to 295 (EWS). The segment at 242-295 (QPEVADWSEGVQVPSVPIQQFPTEDWSAQPSTEDWSAAPTAQATEWVGTTTEWS) is laminin-binding. The interval 266–295 (DWSAQPSTEDWSAAPTAQATEWVGTTTEWS) is disordered.

The protein belongs to the universal ribosomal protein uS2 family. In terms of assembly, monomer (37LRP) and homodimer (67LR). Component of the small ribosomal subunit. Mature ribosomes consist of a small (40S) and a large (60S) subunit. The 40S subunit contains about 33 different proteins and 1 molecule of RNA (18S). The 60S subunit contains about 49 different proteins and 3 molecules of RNA (28S, 5.8S and 5S). Interacts with RPS21. Interacts with several laminins including at least LAMB1. Interacts with MDK. The mature dimeric form interacts with PPP1R16B (via its fourth ankyrin repeat). Interacts with PPP1CA only in the presence of PPP1R16B. Post-translationally, acylated. Acylation may be a prerequisite for conversion of the monomeric 37 kDa laminin receptor precursor (37LRP) to the mature dimeric 67 kDa laminin receptor (67LR), and may provide a mechanism for membrane association. In terms of processing, cleaved by stromelysin-3 (ST3) at the cell surface. Cleavage by stromelysin-3 may be a mechanism to alter cell-extracellular matrix interactions.

It is found in the cell membrane. The protein localises to the cytoplasm. The protein resides in the nucleus. In terms of biological role, required for the assembly and/or stability of the 40S ribosomal subunit. Required for the processing of the 20S rRNA-precursor to mature 18S rRNA in a late step of the maturation of 40S ribosomal subunits. Also functions as a cell surface receptor for laminin. Plays a role in cell adhesion to the basement membrane and in the consequent activation of signaling transduction pathways. May play a role in cell fate determination and tissue morphogenesis. Also acts as a receptor for several other ligands, including the pathogenic prion protein, viruses, and bacteria. Acts as a PPP1R16B-dependent substrate of PPP1CA. The polypeptide is Small ribosomal subunit protein uS2 (Bos taurus (Bovine)).